We begin with the raw amino-acid sequence, 350 residues long: Glycerol-3-phosphate dehydrogenase [NAD(+)], cytoplasmic (350 aa).

Residues 11–16, phenylalanine 98, lysine 121, and alanine 155 each bind NAD(+); that span reads GSGNWG. Residue lysine 121 coordinates substrate. Catalysis depends on lysine 206, which acts as the Proton acceptor. The NAD(+) site is built by arginine 270 and glutamine 299. 270–271 is a binding site for substrate; it reads RN.

This sequence belongs to the NAD-dependent glycerol-3-phosphate dehydrogenase family. Homodimer.

The protein resides in the cytoplasm. The enzyme catalyses sn-glycerol 3-phosphate + NAD(+) = dihydroxyacetone phosphate + NADH + H(+). It functions in the pathway phospholipid metabolism; alpha-glycerophosphate cycle. The protein is Glycerol-3-phosphate dehydrogenase [NAD(+)], cytoplasmic (Gpdh1) of Drosophila ezoana (Fruit fly).